A 399-amino-acid polypeptide reads, in one-letter code: Glutamyl-tRNA reductase (399 aa).

Residues 45 to 48, Ser93, 98 to 100, and Gln104 each bind substrate; these read TCNR and EDQ. Cys46 functions as the Nucleophile in the catalytic mechanism. 173–178 lines the NADP(+) pocket; that stretch reads GAGKMG.

Belongs to the glutamyl-tRNA reductase family. In terms of assembly, homodimer.

It catalyses the reaction (S)-4-amino-5-oxopentanoate + tRNA(Glu) + NADP(+) = L-glutamyl-tRNA(Glu) + NADPH + H(+). The protein operates within porphyrin-containing compound metabolism; protoporphyrin-IX biosynthesis; 5-aminolevulinate from L-glutamyl-tRNA(Glu): step 1/2. Functionally, catalyzes the NADPH-dependent reduction of glutamyl-tRNA(Glu) to glutamate 1-semialdehyde (GSA). This is Glutamyl-tRNA reductase from Methanobrevibacter smithii (strain ATCC 35061 / DSM 861 / OCM 144 / PS).